Reading from the N-terminus, the 462-residue chain is MSQFPSSAIFTVSRLNQTVRQLLEMEMGQIWLSGEISNLSQPSSGHWYFTLKDERAQVRCAMFRTSNRRVTFRPQNGQQVLIRATITLYEPRGDYQLLAESMQPAGDGLLQQQFEQLKQKLAAEGLFDQQFKQVLPSPAKQVGVITSASGAALHDILQVLQRRDPSLPVIVYPTSVQGADAPLQIVRAIELANQREECDVLIVGRGGGSLEDLWSFNDERVARAIFASRIPIVSAVGHETDVTIADFVGDLRAPTPSAAAELVSRNQLELLRQIQSQRQRLEMAMDYYLAQRNREFTRLHHRLQQQHPQLRLARQQAQLVKLRQRLDDAMQQQLRQTLRRSERLQQRLMQQQPQTRIHRAQQRLQQLSYQMQSAVERQLNQNKQKLGIACSRLEGVSPLATLARGYNVTTAPDGKVLKNVTQITPGETLKTRLQDGWVESQVTTLVPNPSSVKKRRKPSSQS.

Belongs to the XseA family. In terms of assembly, heterooligomer composed of large and small subunits.

The protein localises to the cytoplasm. It catalyses the reaction Exonucleolytic cleavage in either 5'- to 3'- or 3'- to 5'-direction to yield nucleoside 5'-phosphates.. Bidirectionally degrades single-stranded DNA into large acid-insoluble oligonucleotides, which are then degraded further into small acid-soluble oligonucleotides. This Pectobacterium carotovorum subsp. carotovorum (strain PC1) protein is Exodeoxyribonuclease 7 large subunit.